The primary structure comprises 343 residues: Protein RecA (343 aa).

64 to 71 (GPESSGKT) contacts ATP.

This sequence belongs to the RecA family.

The protein resides in the cytoplasm. Can catalyze the hydrolysis of ATP in the presence of single-stranded DNA, the ATP-dependent uptake of single-stranded DNA by duplex DNA, and the ATP-dependent hybridization of homologous single-stranded DNAs. It interacts with LexA causing its activation and leading to its autocatalytic cleavage. The polypeptide is Protein RecA (Bacillus thuringiensis (strain Al Hakam)).